Reading from the N-terminus, the 387-residue chain is Early growth response protein 3 (387 aa).

A disordered region spans residues 241–283 (PGFGSLPQPPLTLKPIRPRKYPNRPSKTPLHERPHACPAEGCD). The span at 269-283 (PLHERPHACPAEGCD) shows a compositional bias: basic and acidic residues. 3 consecutive C2H2-type zinc fingers follow at residues 275 to 299 (HACP…LRIH), 305 to 327 (FQCR…IRTH), and 333 to 355 (FACE…AKIH). The disordered stretch occupies residues 348-387 (RKRHAKIHLKQKEKKAEKGGAPSASSAPPVSLAPVVTTCA). The span at 350–360 (RHAKIHLKQKE) shows a compositional bias: basic residues. The span at 368–387 (APSASSAPPVSLAPVVTTCA) shows a compositional bias: low complexity.

The protein belongs to the EGR C2H2-type zinc-finger protein family.

Its subcellular location is the nucleus. Its function is as follows. Probable transcription factor involved in muscle spindle development. The sequence is that of Early growth response protein 3 (EGR3) from Homo sapiens (Human).